Consider the following 357-residue polypeptide: DNA integrity scanning protein DisA (357 aa).

A DAC domain is found at 8–146 (VKSIINILQL…GNLRYTLKDI (139 aa)). Residues glycine 75, leucine 93, and 106–110 (MRHRT) contribute to the ATP site.

The protein belongs to the DisA family. In terms of assembly, homooctamer. Requires Mg(2+) as cofactor.

The catalysed reaction is 2 ATP = 3',3'-c-di-AMP + 2 diphosphate. Functionally, participates in a DNA-damage check-point that is active prior to asymmetric division when DNA is damaged. DisA forms globular foci that rapidly scan along the chromosomes during sporulation, searching for lesions. When a lesion is present, DisA pauses at the lesion site. This triggers a cellular response that culminates in a temporary block in sporulation initiation. Its function is as follows. Also has diadenylate cyclase activity, catalyzing the condensation of 2 ATP molecules into cyclic di-AMP (c-di-AMP). c-di-AMP acts as a signaling molecule that couples DNA integrity with progression of sporulation. The rise in c-di-AMP level generated by DisA while scanning the chromosome, operates as a positive signal that advances sporulation; upon encountering a lesion, the DisA focus arrests at the damaged site and halts c-di-AMP synthesis. The polypeptide is DNA integrity scanning protein DisA (Bacillus cereus (strain B4264)).